Here is a 115-residue protein sequence, read N- to C-terminus: Large ribosomal subunit protein bL19 (115 aa).

This sequence belongs to the bacterial ribosomal protein bL19 family.

Functionally, this protein is located at the 30S-50S ribosomal subunit interface and may play a role in the structure and function of the aminoacyl-tRNA binding site. The chain is Large ribosomal subunit protein bL19 from Streptococcus gordonii (strain Challis / ATCC 35105 / BCRC 15272 / CH1 / DL1 / V288).